The chain runs to 329 residues: Porphobilinogen deaminase (329 aa).

Position 250 is an S-(dipyrrolylmethanemethyl)cysteine (Cys-250).

It belongs to the HMBS family. In terms of assembly, monomer. It depends on dipyrromethane as a cofactor.

It carries out the reaction 4 porphobilinogen + H2O = hydroxymethylbilane + 4 NH4(+). It participates in porphyrin-containing compound metabolism; protoporphyrin-IX biosynthesis; coproporphyrinogen-III from 5-aminolevulinate: step 2/4. Its function is as follows. Tetrapolymerization of the monopyrrole PBG into the hydroxymethylbilane pre-uroporphyrinogen in several discrete steps. This is Porphobilinogen deaminase from Burkholderia mallei (strain NCTC 10247).